A 1029-amino-acid chain; its full sequence is DNA repair protein RAD5A (1029 aa).

A disordered region spans residues serine 83–serine 104. In terms of domain architecture, Helicase ATP-binding spans proline 406–glutamate 622. Residue aspartate 419–threonine 426 coordinates ATP. A DEAH box motif is present at residues aspartate 573–histidine 576. The RING-type zinc finger occupies cysteine 794–arginine 834. The region spanning lysine 864–threonine 1029 is the Helicase C-terminal domain.

This sequence belongs to the SNF2/RAD54 helicase family. RAD16 subfamily.

The protein localises to the nucleus. Its function is as follows. Functions in error-free postreplication DNA repair or DNA-damage tolerance (DTT) pathway. Required for homologous recombination (HR) induced by DNA double-strand break (DSB) in somatic cells. Required for damage-induced DNA repair, independently of MUS81 and RECQL4A. Plays a role in synthesis-dependent strand annealing (SDSA) but not in single-strand annealing (SSA). Possesses double-stranded DNA-dependent ATPase activity. Is able to regress replication forks with preference for forks with a leading strand gap. Is able to catalyze branch migration of Holliday junctions and is unaffected by protein blockades. In Arabidopsis thaliana (Mouse-ear cress), this protein is DNA repair protein RAD5A.